The following is a 281-amino-acid chain: 2-dehydro-3-deoxyphosphooctonate aldolase (281 aa).

Belongs to the KdsA family.

Its subcellular location is the cytoplasm. It carries out the reaction D-arabinose 5-phosphate + phosphoenolpyruvate + H2O = 3-deoxy-alpha-D-manno-2-octulosonate-8-phosphate + phosphate. The protein operates within carbohydrate biosynthesis; 3-deoxy-D-manno-octulosonate biosynthesis; 3-deoxy-D-manno-octulosonate from D-ribulose 5-phosphate: step 2/3. Its pathway is bacterial outer membrane biogenesis; lipopolysaccharide biosynthesis. The protein is 2-dehydro-3-deoxyphosphooctonate aldolase of Azotobacter vinelandii (strain DJ / ATCC BAA-1303).